The sequence spans 255 residues: Ribosomal RNA small subunit methyltransferase A (255 aa).

S-adenosyl-L-methionine is bound by residues histidine 12, leucine 14, glycine 39, glutamate 60, aspartate 81, and asparagine 103.

Belongs to the class I-like SAM-binding methyltransferase superfamily. rRNA adenine N(6)-methyltransferase family. RsmA subfamily.

It is found in the cytoplasm. The enzyme catalyses adenosine(1518)/adenosine(1519) in 16S rRNA + 4 S-adenosyl-L-methionine = N(6)-dimethyladenosine(1518)/N(6)-dimethyladenosine(1519) in 16S rRNA + 4 S-adenosyl-L-homocysteine + 4 H(+). In terms of biological role, specifically dimethylates two adjacent adenosines (A1518 and A1519) in the loop of a conserved hairpin near the 3'-end of 16S rRNA in the 30S particle. May play a critical role in biogenesis of 30S subunits. The protein is Ribosomal RNA small subunit methyltransferase A of Variovorax paradoxus (strain S110).